The chain runs to 423 residues: Phosphoribosylamine--glycine ligase (423 aa).

Positions 107–312 (KAFADRYGLP…LVPYLVACAN (206 aa)) constitute an ATP-grasp domain. 133–193 (LELFEPPYVI…EEFLEGEIGS (61 aa)) serves as a coordination point for ATP. Mg(2+) contacts are provided by Glu270, Glu282, and Asn284. Residues Glu270, Glu282, and Asn284 each contribute to the Mn(2+) site.

Belongs to the GARS family. Mg(2+) serves as cofactor. Mn(2+) is required as a cofactor.

It catalyses the reaction 5-phospho-beta-D-ribosylamine + glycine + ATP = N(1)-(5-phospho-beta-D-ribosyl)glycinamide + ADP + phosphate + H(+). It functions in the pathway purine metabolism; IMP biosynthesis via de novo pathway; N(1)-(5-phospho-D-ribosyl)glycinamide from 5-phospho-alpha-D-ribose 1-diphosphate: step 2/2. The sequence is that of Phosphoribosylamine--glycine ligase from Phenylobacterium zucineum (strain HLK1).